The chain runs to 124 residues: MKFSLIAAVALLALAQGSFAQDAADLEKITQYFENLKNKMTEDVTAFLTNQDVANQAQTFMQERKTQLEPLATQIQEQLRAAATKFEEHITPLAANVQPVVENFQQQMEALVQKLMEKTRSISN.

The N-terminal stretch at 1-20 (MKFSLIAAVALLALAQGSFA) is a signal peptide. Gln21 bears the Pyrrolidone carboxylic acid mark.

Belongs to the apolipoprotein A1/A4/E family.

The protein localises to the secreted. In terms of biological role, antifreeze proteins lower the blood freezing point. The chain is Type-4 ice-structuring protein from Paralichthys olivaceus (Bastard halibut).